The chain runs to 308 residues: D-alanine--D-alanine ligase (308 aa).

The 198-residue stretch at 104–301 folds into the ATP-grasp domain; that stretch reads KQIWQGSDLP…FDELCVAILD (198 aa). ATP is bound at residue 130 to 185; it reads IAELGLPVIIKPVHEGSSVGMSKVEKAEDFAAAIEKATQHDAVVMAEKWITGREFT. The Mg(2+) site is built by Asp-255, Glu-268, and Asn-270.

Belongs to the D-alanine--D-alanine ligase family. Mg(2+) is required as a cofactor. It depends on Mn(2+) as a cofactor.

It is found in the cytoplasm. It catalyses the reaction 2 D-alanine + ATP = D-alanyl-D-alanine + ADP + phosphate + H(+). Its pathway is cell wall biogenesis; peptidoglycan biosynthesis. In terms of biological role, cell wall formation. In Acinetobacter baumannii (strain AB307-0294), this protein is D-alanine--D-alanine ligase.